We begin with the raw amino-acid sequence, 103 residues long: Methanol dehydrogenase [cytochrome c] subunit 2 (103 aa).

An N-terminal signal peptide occupies residues 1–20; it reads MKRILTLTVAALALGTPALA. A disulfide bridge connects residues Cys26 and Cys32.

The protein belongs to the methanol dehydrogenase subunit 2 family. As to quaternary structure, heterotetramer composed of 2 alpha and 2 beta subunits.

The protein localises to the periplasm. The enzyme catalyses 2 Fe(III)-[cytochrome cL] + a primary alcohol = 2 Fe(II)-[cytochrome cL] + an aldehyde + 2 H(+). In terms of biological role, catalyzes the oxidation of primary alcohols including methanol. The protein is Methanol dehydrogenase [cytochrome c] subunit 2 (moxI) of Paracoccus denitrificans.